The chain runs to 269 residues: 4-hydroxy-tetrahydrodipicolinate reductase (269 aa).

Residues 8 to 13 and E34 each bind NAD(+); that span reads GAAGRM. Position 35 (R35) interacts with NADP(+). Residues 98–100 and 122–125 each bind NAD(+); these read GTT and APNY. The active-site Proton donor/acceptor is the H155. H156 lines the (S)-2,3,4,5-tetrahydrodipicolinate pocket. K159 functions as the Proton donor in the catalytic mechanism. 165-166 is a binding site for (S)-2,3,4,5-tetrahydrodipicolinate; that stretch reads GT.

The protein belongs to the DapB family.

It is found in the cytoplasm. It catalyses the reaction (S)-2,3,4,5-tetrahydrodipicolinate + NAD(+) + H2O = (2S,4S)-4-hydroxy-2,3,4,5-tetrahydrodipicolinate + NADH + H(+). It carries out the reaction (S)-2,3,4,5-tetrahydrodipicolinate + NADP(+) + H2O = (2S,4S)-4-hydroxy-2,3,4,5-tetrahydrodipicolinate + NADPH + H(+). It participates in amino-acid biosynthesis; L-lysine biosynthesis via DAP pathway; (S)-tetrahydrodipicolinate from L-aspartate: step 4/4. Functionally, catalyzes the conversion of 4-hydroxy-tetrahydrodipicolinate (HTPA) to tetrahydrodipicolinate. This chain is 4-hydroxy-tetrahydrodipicolinate reductase, found in Vibrio vulnificus (strain CMCP6).